The following is a 206-amino-acid chain: Probable thymidylate kinase (206 aa).

10–17 (GIDGSGKS) is a binding site for ATP.

The protein belongs to the thymidylate kinase family.

The enzyme catalyses dTMP + ATP = dTDP + ADP. The polypeptide is Probable thymidylate kinase (Methanosarcina acetivorans (strain ATCC 35395 / DSM 2834 / JCM 12185 / C2A)).